The following is a 550-amino-acid chain: Glucose-6-phosphate isomerase (550 aa).

D-glucose 6-phosphate-binding positions include 163–164 (GS), 214–219 (SKTFTT), Q358, E362, H393, and K515. The active-site Proton donor is E362. Active-site residues include H393 and K515.

It belongs to the GPI family. As to quaternary structure, homodimer.

The protein localises to the cytoplasm. The enzyme catalyses alpha-D-glucose 6-phosphate = beta-D-fructose 6-phosphate. Its pathway is carbohydrate degradation; glycolysis; D-glyceraldehyde 3-phosphate and glycerone phosphate from D-glucose: step 2/4. Its function is as follows. In the cytoplasm, catalyzes the conversion of glucose-6-phosphate to fructose-6-phosphate, the second step in glycolysis, and the reverse reaction during gluconeogenesis. The polypeptide is Glucose-6-phosphate isomerase (PGI1) (Candida albicans (strain SC5314 / ATCC MYA-2876) (Yeast)).